The primary structure comprises 165 residues: Phosphopantetheine adenylyltransferase (165 aa).

Ser-10 serves as a coordination point for substrate. Residues 10–11 (SF) and His-18 contribute to the ATP site. The substrate site is built by Lys-42, Ser-79, and Arg-93. ATP contacts are provided by residues 94 to 96 (GLR), Glu-104, and 129 to 135 (VRPITAT).

It belongs to the bacterial CoaD family. Homohexamer. The cofactor is Mg(2+).

The protein resides in the cytoplasm. It catalyses the reaction (R)-4'-phosphopantetheine + ATP + H(+) = 3'-dephospho-CoA + diphosphate. Its pathway is cofactor biosynthesis; coenzyme A biosynthesis; CoA from (R)-pantothenate: step 4/5. Its function is as follows. Reversibly transfers an adenylyl group from ATP to 4'-phosphopantetheine, yielding dephospho-CoA (dPCoA) and pyrophosphate. This Bradyrhizobium diazoefficiens (strain JCM 10833 / BCRC 13528 / IAM 13628 / NBRC 14792 / USDA 110) protein is Phosphopantetheine adenylyltransferase.